The chain runs to 489 residues: ATP-dependent zinc metalloprotease FtsH 3 (489 aa).

The Cytoplasmic portion of the chain corresponds to 1–14 (MNPRPVRPGGSLQQ). Residues 15–31 (SLLALGSLSVAVGLAVW) form a helical membrane-spanning segment. Topologically, residues 32–489 (QQRTLGRGRS…GPRPARPAMN (458 aa)) are extracellular. 95–102 (GPPGTGKT) contacts ATP. His315 is a binding site for Zn(2+). Residue Glu316 is part of the active site. Zn(2+)-binding residues include His319 and Asp391.

This sequence in the central section; belongs to the AAA ATPase family. In the C-terminal section; belongs to the peptidase M41 family. Homohexamer. It depends on Zn(2+) as a cofactor.

It is found in the cell membrane. Its function is as follows. Acts as a processive, ATP-dependent zinc metallopeptidase for both cytoplasmic and membrane proteins. Plays a role in the quality control of integral membrane proteins. In Sphaerobacter thermophilus (strain ATCC 49802 / DSM 20745 / KCCM 41009 / NCIMB 13125 / S 6022), this protein is ATP-dependent zinc metalloprotease FtsH 3.